The primary structure comprises 20 residues: Superoxide dismutase [Mn], mitochondrial (20 aa).

This sequence belongs to the iron/manganese superoxide dismutase family. As to quaternary structure, homotetramer. It depends on Mn(2+) as a cofactor.

It is found in the mitochondrion matrix. The catalysed reaction is 2 superoxide + 2 H(+) = H2O2 + O2. Its function is as follows. Destroys superoxide anion radicals which are normally produced within the cells and which are toxic to biological systems. This Hordeum vulgare (Barley) protein is Superoxide dismutase [Mn], mitochondrial (SODA).